The primary structure comprises 151 residues: HTH-type transcriptional regulator FL11 (151 aa).

Positions 5 to 66 constitute an HTH asnC-type domain; it reads LDEIDRRIIK…IVNPEALGYS (62 aa). Positions 24 to 43 form a DNA-binding region, H-T-H motif; it reads LREISKITGLAESTIHERIK. 98-104 lines the L-arginine pocket; that stretch reads ETTGDYD. L-lysine-binding positions include asparagine 118, aspartate 122, and 133–135; that span reads THT. L-arginine is bound by residues aspartate 122 and 133-135; that span reads THT.

As to quaternary structure, homodimer. Binds DNA as a dimer and an octamer.

With respect to regulation, in the famine mode, FL11 forms dimers and acts as a repressor, leading to growth arrest. In the feast mode, in the presence of high concentrations of lysine or arginine, four dimers assemble into an octamer and cover the fl11 and lysine biosynthesis promoters. This leads to the inhibition of fl11 expression and lysine biosynthesis, decrease of the FL11 concentration in the cell, derepression of the target genes and activation of the metabolism. Functionally, DNA-binding protein involved in the repression of transcription of a large number of genes, thereby arresting growth, in response to environmental changes. The chain is HTH-type transcriptional regulator FL11 from Pyrococcus abyssi (strain GE5 / Orsay).